We begin with the raw amino-acid sequence, 117 residues long: Large ribosomal subunit protein uL18 (117 aa).

The protein belongs to the universal ribosomal protein uL18 family. In terms of assembly, part of the 50S ribosomal subunit; part of the 5S rRNA/L5/L18/L25 subcomplex. Contacts the 5S and 23S rRNAs.

Functionally, this is one of the proteins that bind and probably mediate the attachment of the 5S RNA into the large ribosomal subunit, where it forms part of the central protuberance. The sequence is that of Large ribosomal subunit protein uL18 from Proteus mirabilis (strain HI4320).